Consider the following 443-residue polypeptide: Phosphoglucosamine mutase (443 aa).

Catalysis depends on Ser-103, which acts as the Phosphoserine intermediate. The Mg(2+) site is built by Ser-103, Asp-244, Asp-246, and Asp-248. Residue Ser-103 is modified to Phosphoserine.

Belongs to the phosphohexose mutase family. Mg(2+) serves as cofactor. Activated by phosphorylation.

The enzyme catalyses alpha-D-glucosamine 1-phosphate = D-glucosamine 6-phosphate. Catalyzes the conversion of glucosamine-6-phosphate to glucosamine-1-phosphate. This is Phosphoglucosamine mutase from Pelagibacter ubique (strain HTCC1062).